The following is an 82-amino-acid chain: Apovitellenin-1 (82 aa).

Belongs to the apovitellenin family. In terms of assembly, monomer. Found in egg yolk and in plasma.

Functionally, protein component of the very low density lipoprotein (VLDL) of egg-laying females. Potent lipoprotein lipase inhibitor, preventing the loss of triglycerides from VLDL on their way from the liver to the growing oocytes. The polypeptide is Apovitellenin-1 (Anas platyrhynchos (Mallard)).